A 728-amino-acid chain; its full sequence is Phosphoribosylformylglycinamidine synthase subunit PurL (728 aa).

His-42 is a catalytic residue. ATP-binding residues include Tyr-45 and Lys-84. Glu-86 lines the Mg(2+) pocket. Residues 87 to 90 (SHNH) and Arg-109 contribute to the substrate site. His-88 acts as the Proton acceptor in catalysis. Asp-110 contacts Mg(2+). Gln-237 contacts substrate. A Mg(2+)-binding site is contributed by Asp-265. 309–311 (ESQ) lines the substrate pocket. Residues Asp-491 and Gly-528 each contribute to the ATP site. Asn-529 contributes to the Mg(2+) binding site. Position 531 (Ser-531) interacts with substrate.

Belongs to the FGAMS family. In terms of assembly, monomer. Part of the FGAM synthase complex composed of 1 PurL, 1 PurQ and 2 PurS subunits.

The protein localises to the cytoplasm. The enzyme catalyses N(2)-formyl-N(1)-(5-phospho-beta-D-ribosyl)glycinamide + L-glutamine + ATP + H2O = 2-formamido-N(1)-(5-O-phospho-beta-D-ribosyl)acetamidine + L-glutamate + ADP + phosphate + H(+). The protein operates within purine metabolism; IMP biosynthesis via de novo pathway; 5-amino-1-(5-phospho-D-ribosyl)imidazole from N(2)-formyl-N(1)-(5-phospho-D-ribosyl)glycinamide: step 1/2. In terms of biological role, part of the phosphoribosylformylglycinamidine synthase complex involved in the purines biosynthetic pathway. Catalyzes the ATP-dependent conversion of formylglycinamide ribonucleotide (FGAR) and glutamine to yield formylglycinamidine ribonucleotide (FGAM) and glutamate. The FGAM synthase complex is composed of three subunits. PurQ produces an ammonia molecule by converting glutamine to glutamate. PurL transfers the ammonia molecule to FGAR to form FGAM in an ATP-dependent manner. PurS interacts with PurQ and PurL and is thought to assist in the transfer of the ammonia molecule from PurQ to PurL. In Campylobacter jejuni subsp. doylei (strain ATCC BAA-1458 / RM4099 / 269.97), this protein is Phosphoribosylformylglycinamidine synthase subunit PurL.